A 367-amino-acid chain; its full sequence is GTP cyclohydrolase FolE2 (367 aa).

The protein belongs to the GTP cyclohydrolase IV family.

The enzyme catalyses GTP + H2O = 7,8-dihydroneopterin 3'-triphosphate + formate + H(+). The protein operates within cofactor biosynthesis; 7,8-dihydroneopterin triphosphate biosynthesis; 7,8-dihydroneopterin triphosphate from GTP: step 1/1. In terms of biological role, converts GTP to 7,8-dihydroneopterin triphosphate. The chain is GTP cyclohydrolase FolE2 from Ruegeria sp. (strain TM1040) (Silicibacter sp.).